Here is a 119-residue protein sequence, read N- to C-terminus: DNA-binding protein inhibitor ID-3 (119 aa).

Residues 28–80 (RGKGPAAEEPLSLLDDMNHCYSRLRELVPGVPRGTQLSQVEILQRVIDYILDL) form the bHLH domain.

Homodimer, and heterodimer with other HLH proteins. Interacts with COPS5 and COPS7A. Interacts with IFI204. Interacts with GATA4 and NKX2-5. Interacts with ANKRD2; both proteins cooperate in myoblast differentiation. Interacts with CLOCK and BMAL1. As to expression, expressed abundantly in lung, kidney and adrenal gland, but not in adult brain.

The protein localises to the nucleus. Its function is as follows. Transcriptional regulator (lacking a basic DNA binding domain) which negatively regulates the basic helix-loop-helix (bHLH) transcription factors by forming heterodimers and inhibiting their DNA binding and transcriptional activity. Implicated in regulating a variety of cellular processes, including cellular growth, senescence, differentiation, apoptosis, angiogenesis, and neoplastic transformation. Involved in myogenesis by inhibiting skeletal muscle and cardiac myocyte differentiation and promoting muscle precursor cells proliferation. Inhibits the binding of E2A-containing protein complexes to muscle creatine kinase E-box enhancer. Regulates the circadian clock by repressing the transcriptional activator activity of the CLOCK-BMAL1 heterodimer. The sequence is that of DNA-binding protein inhibitor ID-3 (ID3) from Homo sapiens (Human).